Reading from the N-terminus, the 137-residue chain is Small ribosomal subunit protein uS12 (137 aa).

Disordered stretches follow at residues M1–S21 and T36–K57. D102 is subject to 3-methylthioaspartic acid.

It belongs to the universal ribosomal protein uS12 family. In terms of assembly, part of the 30S ribosomal subunit. Contacts proteins S8 and S17. May interact with IF1 in the 30S initiation complex.

Functionally, with S4 and S5 plays an important role in translational accuracy. In terms of biological role, interacts with and stabilizes bases of the 16S rRNA that are involved in tRNA selection in the A site and with the mRNA backbone. Located at the interface of the 30S and 50S subunits, it traverses the body of the 30S subunit contacting proteins on the other side and probably holding the rRNA structure together. The combined cluster of proteins S8, S12 and S17 appears to hold together the shoulder and platform of the 30S subunit. In Streptococcus agalactiae serotype Ia (strain ATCC 27591 / A909 / CDC SS700), this protein is Small ribosomal subunit protein uS12.